A 355-amino-acid chain; its full sequence is Histidinol-phosphate aminotransferase (355 aa).

An N6-(pyridoxal phosphate)lysine modification is found at K211.

This sequence belongs to the class-II pyridoxal-phosphate-dependent aminotransferase family. Histidinol-phosphate aminotransferase subfamily. In terms of assembly, homodimer. Requires pyridoxal 5'-phosphate as cofactor.

The enzyme catalyses L-histidinol phosphate + 2-oxoglutarate = 3-(imidazol-4-yl)-2-oxopropyl phosphate + L-glutamate. It functions in the pathway amino-acid biosynthesis; L-histidine biosynthesis; L-histidine from 5-phospho-alpha-D-ribose 1-diphosphate: step 7/9. The protein is Histidinol-phosphate aminotransferase of Aeromonas salmonicida (strain A449).